A 316-amino-acid polypeptide reads, in one-letter code: Transaldolase (316 aa).

The active-site Schiff-base intermediate with substrate is the lysine 132.

This sequence belongs to the transaldolase family. Type 1 subfamily. In terms of assembly, homodimer.

Its subcellular location is the cytoplasm. It carries out the reaction D-sedoheptulose 7-phosphate + D-glyceraldehyde 3-phosphate = D-erythrose 4-phosphate + beta-D-fructose 6-phosphate. It participates in carbohydrate degradation; pentose phosphate pathway; D-glyceraldehyde 3-phosphate and beta-D-fructose 6-phosphate from D-ribose 5-phosphate and D-xylulose 5-phosphate (non-oxidative stage): step 2/3. Its function is as follows. Transaldolase is important for the balance of metabolites in the pentose-phosphate pathway. The protein is Transaldolase of Aeromonas salmonicida (strain A449).